We begin with the raw amino-acid sequence, 317 residues long: Acetyl-coenzyme A carboxylase carboxyl transferase subunit alpha (317 aa).

A CoA carboxyltransferase C-terminal domain is found at Lys41–Asp291.

This sequence belongs to the AccA family. Acetyl-CoA carboxylase is a heterohexamer composed of biotin carboxyl carrier protein (AccB), biotin carboxylase (AccC) and two subunits each of ACCase subunit alpha (AccA) and ACCase subunit beta (AccD).

The protein localises to the cytoplasm. It catalyses the reaction N(6)-carboxybiotinyl-L-lysyl-[protein] + acetyl-CoA = N(6)-biotinyl-L-lysyl-[protein] + malonyl-CoA. It participates in lipid metabolism; malonyl-CoA biosynthesis; malonyl-CoA from acetyl-CoA: step 1/1. Component of the acetyl coenzyme A carboxylase (ACC) complex. First, biotin carboxylase catalyzes the carboxylation of biotin on its carrier protein (BCCP) and then the CO(2) group is transferred by the carboxyltransferase to acetyl-CoA to form malonyl-CoA. The chain is Acetyl-coenzyme A carboxylase carboxyl transferase subunit alpha from Paramagnetospirillum magneticum (strain ATCC 700264 / AMB-1) (Magnetospirillum magneticum).